The primary structure comprises 564 residues: Plant UBX domain-containing protein 8 (564 aa).

Ala-2 is subject to N-acetylalanine. In terms of domain architecture, UBA-like spans 2–44 (ATPNQEAIDTFISITGASDAVALQKLEEHRGDLNQAVNAYFSE). 2 consecutive UIM domains span residues 198–217 (IEEE…AEGS) and 230–249 (EDDD…AEEE). Positions 210–229 (SKKEAEGSSNPLLEERPLHM) are disordered. Disordered stretches follow at residues 267 to 358 (AVTA…EEHD), 371 to 423 (IPET…DKEM), and 443 to 483 (FLEE…QADE). Acidic residues predominate over residues 291–300 (FDDDSDDVDE). Residues Ser-295, Ser-324, Ser-326, and Ser-328 each carry the phosphoserine modification. Positions 322-334 (DRSRSGSPEEEHA) are enriched in basic and acidic residues. A compositionally biased stretch (pro residues) spans 381–395 (FLPPQPRAQPRPPSP). Positions 412–478 (VASLQADRDK…DAKEASLPKE (67 aa)) form a coiled coil. The span at 443 to 475 (FLEEEKKKEEEAQRKLEEEQELERQLDAKEASL) shows a compositional bias: basic and acidic residues. Residues 482–560 (DEENAITLLI…GLTSKQEALF (79 aa)) enclose the UBX domain.

Interacts with RABA5C/ARA-4.

This Arabidopsis thaliana (Mouse-ear cress) protein is Plant UBX domain-containing protein 8.